The primary structure comprises 153 residues: UPF0756 membrane protein LSL_0936 (153 aa).

The next 5 membrane-spanning stretches (helical) occupy residues 4–24, 26–46, 51–71, 86–106, and 116–136; these read WIFLGLILLIAYLGKNSSLLI, GAVVIVIKLFPFLSQKLYPVI, INWGVTIISVAILIPIATGQI, WIAVVCGILVAILSKHGVNLL, and LVIGTIIGVVFLKGVAAGPVI.

It belongs to the UPF0756 family.

Its subcellular location is the cell membrane. The polypeptide is UPF0756 membrane protein LSL_0936 (Ligilactobacillus salivarius (strain UCC118) (Lactobacillus salivarius)).